Here is a 427-residue protein sequence, read N- to C-terminus: MASILHYFLALSLSCSFLFFLSDSVTPTKPINLVVLPVQNDGSTGLHWANLQKRTPLMQVPVLVDLNGNHLWVNCEQQYSSKTYQAPFCHSTQCSRANTHQCLSCPAASRPGCHKNTCGLMSTNPITQQTGLGELGEDVLAIHATQGSTQQLGPLVTVPQFLFSCAPSFLVQKGLPRNTQGVAGLGHAPISLPNQLASHFGLQRQFTTCLSRYPTSKGAIIFGDAPNNMRQFQNQDIFHDLAFTPLTITLQGEYNVRVNSIRINQHSVFPLNKISSTIVGSTSGGTMISTSTPHMVLQQSVYQAFTQVFAQQLPKQAQVKSVAPFGLCFNSNKINAYPSVDLVMDKPNGPVWRISGEDLMVQAQPGVTCLGVMNGGMQPRAEITLGARQLEENLVVFDLARSRVGFSTSSLHSHGVKCADLFNFANA.

An N-terminal signal peptide occupies residues 1–24 (MASILHYFLALSLSCSFLFFLSDS). The Peptidase A1 domain maps to 47–407 (HWANLQKRTP…DLARSRVGFS (361 aa)).

Belongs to the peptidase A1 family. The mature protein consists of high- and low-kDa subunits linked by disulfide bonds.

Its function is as follows. Seed storage protein. Has a protein kinase activity. Binds leginsulin. The protein is Basic 7S globulin (BG) of Glycine max (Soybean).